The chain runs to 279 residues: 5'-nucleotidase SurE (279 aa).

D28, D29, S59, and N113 together coordinate a divalent metal cation.

Belongs to the SurE nucleotidase family. A divalent metal cation serves as cofactor.

The protein resides in the cytoplasm. The enzyme catalyses a ribonucleoside 5'-phosphate + H2O = a ribonucleoside + phosphate. Functionally, nucleotidase that shows phosphatase activity on nucleoside 5'-monophosphates. This chain is 5'-nucleotidase SurE, found in Methanospirillum hungatei JF-1 (strain ATCC 27890 / DSM 864 / NBRC 100397 / JF-1).